Here is a 743-residue protein sequence, read N- to C-terminus: Phosphoribosylformylglycinamidine synthase subunit PurL (743 aa).

Residue His50 is part of the active site. 2 residues coordinate ATP: Tyr53 and Lys92. Glu94 lines the Mg(2+) pocket. Residues 95 to 98 (SHNH) and Arg117 each bind substrate. His96 (proton acceptor) is an active-site residue. Asp118 lines the Mg(2+) pocket. A substrate-binding site is contributed by Gln241. Asp269 is a binding site for Mg(2+). 313-315 (ESQ) is a substrate binding site. ATP-binding residues include Asp494 and Gly531. Residue Asn532 coordinates Mg(2+). Residue Ser534 coordinates substrate.

Belongs to the FGAMS family. In terms of assembly, monomer. Part of the FGAM synthase complex composed of 1 PurL, 1 PurQ and 2 PurS subunits.

It is found in the cytoplasm. The catalysed reaction is N(2)-formyl-N(1)-(5-phospho-beta-D-ribosyl)glycinamide + L-glutamine + ATP + H2O = 2-formamido-N(1)-(5-O-phospho-beta-D-ribosyl)acetamidine + L-glutamate + ADP + phosphate + H(+). It participates in purine metabolism; IMP biosynthesis via de novo pathway; 5-amino-1-(5-phospho-D-ribosyl)imidazole from N(2)-formyl-N(1)-(5-phospho-D-ribosyl)glycinamide: step 1/2. Its function is as follows. Part of the phosphoribosylformylglycinamidine synthase complex involved in the purines biosynthetic pathway. Catalyzes the ATP-dependent conversion of formylglycinamide ribonucleotide (FGAR) and glutamine to yield formylglycinamidine ribonucleotide (FGAM) and glutamate. The FGAM synthase complex is composed of three subunits. PurQ produces an ammonia molecule by converting glutamine to glutamate. PurL transfers the ammonia molecule to FGAR to form FGAM in an ATP-dependent manner. PurS interacts with PurQ and PurL and is thought to assist in the transfer of the ammonia molecule from PurQ to PurL. This Mesorhizobium japonicum (strain LMG 29417 / CECT 9101 / MAFF 303099) (Mesorhizobium loti (strain MAFF 303099)) protein is Phosphoribosylformylglycinamidine synthase subunit PurL.